A 791-amino-acid chain; its full sequence is uncharacterized protein (791 aa).

The tract at residues 267–288 (APGESSAQSSYEQSTRAGDSAP) is disordered. Polar residues predominate over residues 271-283 (SSAQSSYEQSTRA).

This is an uncharacterized protein from Treponema pallidum (strain Nichols).